The chain runs to 76 residues: Small ribosomal subunit protein bS18 (76 aa).

The protein belongs to the bacterial ribosomal protein bS18 family. Part of the 30S ribosomal subunit. Forms a tight heterodimer with protein bS6.

Binds as a heterodimer with protein bS6 to the central domain of the 16S rRNA, where it helps stabilize the platform of the 30S subunit. The protein is Small ribosomal subunit protein bS18 of Aeromonas hydrophila subsp. hydrophila (strain ATCC 7966 / DSM 30187 / BCRC 13018 / CCUG 14551 / JCM 1027 / KCTC 2358 / NCIMB 9240 / NCTC 8049).